The following is a 610-amino-acid chain: Sulfite reductase [NADPH] flavoprotein alpha-component (610 aa).

Residues 68-206 enclose the Flavodoxin-like domain; sequence IIVISASQTG…EVDKWKEKVV (139 aa). Residues 74–79, 121–124, and 157–166 each bind FMN; these read SQTGNA, STHG, and LGDRSYEYFA. The region spanning 243 to 459 is the FAD-binding FR-type domain; it reads EFPLIAYLLN…VESNDNFRLP (217 aa). FAD-binding positions include T331, S365, 397–400, 415–417, Y421, and 430–433; these read RFYS, TVS, and GGAS. Residues 530–531, 536–540, and D572 each bind NADP(+); these read SR and KVYVQ. Y610 contacts FAD.

Belongs to the NADPH-dependent sulphite reductase flavoprotein subunit CysJ family. This sequence in the N-terminal section; belongs to the flavodoxin family. The protein in the C-terminal section; belongs to the flavoprotein pyridine nucleotide cytochrome reductase family. In terms of assembly, alpha(8)-beta(8). The alpha component is a flavoprotein, the beta component is a hemoprotein. It depends on FAD as a cofactor. The cofactor is FMN.

The catalysed reaction is hydrogen sulfide + 3 NADP(+) + 3 H2O = sulfite + 3 NADPH + 4 H(+). It participates in sulfur metabolism; hydrogen sulfide biosynthesis; hydrogen sulfide from sulfite (NADPH route): step 1/1. Functionally, component of the sulfite reductase complex that catalyzes the 6-electron reduction of sulfite to sulfide. This is one of several activities required for the biosynthesis of L-cysteine from sulfate. The flavoprotein component catalyzes the electron flow from NADPH -&gt; FAD -&gt; FMN to the hemoprotein component. This is Sulfite reductase [NADPH] flavoprotein alpha-component from Blochmanniella floridana.